We begin with the raw amino-acid sequence, 218 residues long: Probable signal peptidase I-2 (218 aa).

At 1-26 (MTENIVRETSKKKESPPENTWLELGK) the chain is on the cytoplasmic side. The helical transmembrane segment at 27–43 (TMVTAVILAIGIRTFVA) threads the bilayer. Residues 44-218 (EARYIPSSSM…ISPQTVPESR (175 aa)) are Periplasmic-facing. Catalysis depends on residues Ser-52 and Lys-100.

It belongs to the peptidase S26 family.

Its subcellular location is the cell membrane. It carries out the reaction Cleavage of hydrophobic, N-terminal signal or leader sequences from secreted and periplasmic proteins.. This Synechocystis sp. (strain ATCC 27184 / PCC 6803 / Kazusa) protein is Probable signal peptidase I-2 (lepB2).